A 219-amino-acid polypeptide reads, in one-letter code: Large ribosomal subunit protein uL4 (219 aa).

The tract at residues 45-103 is disordered; the sequence is ARRQGTHATKTRGQVRGGGRKPYRQKGTGRARQGSIRAPQFTGGGTVHGPQPRDYDQRT. A compositionally biased stretch (basic residues) spans 62–73; the sequence is GGRKPYRQKGTG.

It belongs to the universal ribosomal protein uL4 family. Part of the 50S ribosomal subunit.

Its function is as follows. One of the primary rRNA binding proteins, this protein initially binds near the 5'-end of the 23S rRNA. It is important during the early stages of 50S assembly. It makes multiple contacts with different domains of the 23S rRNA in the assembled 50S subunit and ribosome. In terms of biological role, forms part of the polypeptide exit tunnel. In Corynebacterium kroppenstedtii (strain DSM 44385 / JCM 11950 / CIP 105744 / CCUG 35717), this protein is Large ribosomal subunit protein uL4.